The sequence spans 620 residues: Probable protein arginine N-methyltransferase 3 (620 aa).

Positions 1 to 17 are enriched in basic and acidic residues; the sequence is MATREHELRPEQERLGE. Residues 1–45 form a disordered region; it reads MATREHELRPEQERLGEDREEYEDGEEEEEEGEEGWDDWESDGDD. Positions 18–45 are enriched in acidic residues; it reads DREEYEDGEEEEEEGEEGWDDWESDGDD. The C2H2-type 1 zinc finger occupies 55–78; that stretch reads LLCLFCSARFDSESSLFSHCASEH. The C2H2-type 2; degenerate zinc finger occupies 110-137; the sequence is NKCWSCGQVFSSNSELCGHLHALEIPQL. The region spanning 253 to 582 is the SAM-dependent MTase PRMT-type domain; sequence DESYFGSYSS…DECPAVMIRS (330 aa). 5 residues coordinate S-adenosyl-L-homocysteine: Arg275, Gly299, Asp321, Ser323, and Glu364. Active-site residues include Glu383 and Glu392.

This sequence belongs to the class I-like SAM-binding methyltransferase superfamily. Protein arginine N-methyltransferase family.

It localises to the cytoplasm. The protein localises to the cytosol. It catalyses the reaction L-arginyl-[protein] + S-adenosyl-L-methionine = N(omega)-methyl-L-arginyl-[protein] + S-adenosyl-L-homocysteine + H(+). The enzyme catalyses L-arginyl-[protein] + 2 S-adenosyl-L-methionine = N(omega),N(omega)-dimethyl-L-arginyl-[protein] + 2 S-adenosyl-L-homocysteine + 2 H(+). Its function is as follows. Protein-arginine N-methyltransferase that catalyzes both the monomethylation and asymmetric dimethylation of the guanidino nitrogens of arginine residues in target proteins, and therefore falls into the group of type I methyltransferases. This chain is Probable protein arginine N-methyltransferase 3 (PRMT3), found in Oryza sativa subsp. japonica (Rice).